The primary structure comprises 166 residues: Large ribosomal subunit protein uL10 (166 aa).

This sequence belongs to the universal ribosomal protein uL10 family. Part of the ribosomal stalk of the 50S ribosomal subunit. The N-terminus interacts with L11 and the large rRNA to form the base of the stalk. The C-terminus forms an elongated spine to which L12 dimers bind in a sequential fashion forming a multimeric L10(L12)X complex.

Forms part of the ribosomal stalk, playing a central role in the interaction of the ribosome with GTP-bound translation factors. This chain is Large ribosomal subunit protein uL10, found in Staphylococcus carnosus (strain TM300).